Consider the following 336-residue polypeptide: MPTDNDLKAAILELLRDLDVLLVAHFYQKDEIVELAHYTGDSLELAKIASQSDKNLIVFCGVHFMGESVKALAFDKQVIMPKLSCCSMARMIDSHYYDRSVHLLKECGVKEFYPITYINSNAEVKAKVAKDDGVVCTSRNASKIFNHALKQNKKIFFLPDKCLGENLALENGLKSAILGANSQEEIKNADVVCYNGFCSVHQLFKLEDIEFYRQKYPDILIAVHPECEPSVVSNADFSGSTSQIIEFVEKLSPNQKVAIGTESHLVNRLKAKRHHQNTFILSSTLALCPTMNETTLKDLFEVLKAYKNHRAYNTIELKDEVARLAKLALTKMMELS.

Iminosuccinate-binding residues include histidine 25 and serine 42. Cysteine 86 contacts [4Fe-4S] cluster. Iminosuccinate-binding positions include 117–119 and serine 138; that span reads YIN. Cysteine 198 contributes to the [4Fe-4S] cluster binding site. Residues 224-226 and threonine 241 each bind iminosuccinate; that span reads HPE. [4Fe-4S] cluster is bound at residue cysteine 288.

The protein belongs to the quinolinate synthase family. Type 3 subfamily. [4Fe-4S] cluster serves as cofactor.

The protein resides in the cytoplasm. It carries out the reaction iminosuccinate + dihydroxyacetone phosphate = quinolinate + phosphate + 2 H2O + H(+). Its pathway is cofactor biosynthesis; NAD(+) biosynthesis; quinolinate from iminoaspartate: step 1/1. Functionally, catalyzes the condensation of iminoaspartate with dihydroxyacetone phosphate to form quinolinate. In Helicobacter pylori (strain ATCC 700392 / 26695) (Campylobacter pylori), this protein is Quinolinate synthase.